The primary structure comprises 274 residues: Cytochrome c oxidase subunit 3 (274 aa).

Residues 1–15 (MTHQTHAYHMVNPSP) are Mitochondrial matrix-facing. A helical transmembrane segment spans residues 16 to 34 (WPLTGALSALLMTSGLAMW). Topologically, residues 35-40 (FHFNSS) are mitochondrial intermembrane. A helical membrane pass occupies residues 41 to 66 (MLLSLGMLTNLLTMYQWWRDIVREGT). Residues 67 to 72 (FQGHHT) lie on the Mitochondrial matrix side of the membrane. Residues 73 to 105 (SIVQKGLRYGMVLFIISEIFFFAGFFWAFYHSS) form a helical membrane-spanning segment. Residues 106-128 (LAPTPELGGCWPPTGIHPLNPLE) lie on the Mitochondrial intermembrane side of the membrane. The helical transmembrane segment at 129-152 (VPLLNTAVLLASGVSITWAHHSLM) threads the bilayer. The Mitochondrial matrix segment spans residues 153 to 155 (EGN). The helical transmembrane segment at 156–183 (RVQMLQALLITITLGLYFTLLQASEYFE) threads the bilayer. Residues 184 to 190 (TSFTISD) are Mitochondrial intermembrane-facing. Residues 191–223 (GVYGSTFFMATGFHGLHVIIGSTFLTVCFFRQL) form a helical membrane-spanning segment. At 224–232 (SFHFTSNHH) the chain is on the mitochondrial matrix side. Residues 233-256 (FGFEAAAWYWHFVDVVWLFLYVSI) traverse the membrane as a helical segment. Residues 257 to 274 (YWWGSYSFSIDPMQLTSN) lie on the Mitochondrial intermembrane side of the membrane.

Belongs to the cytochrome c oxidase subunit 3 family. As to quaternary structure, component of the cytochrome c oxidase (complex IV, CIV), a multisubunit enzyme composed of 14 subunits. The complex is composed of a catalytic core of 3 subunits MT-CO1, MT-CO2 and MT-CO3, encoded in the mitochondrial DNA, and 11 supernumerary subunits COX4I, COX5A, COX5B, COX6A, COX6B, COX6C, COX7A, COX7B, COX7C, COX8 and NDUFA4, which are encoded in the nuclear genome. The complex exists as a monomer or a dimer and forms supercomplexes (SCs) in the inner mitochondrial membrane with NADH-ubiquinone oxidoreductase (complex I, CI) and ubiquinol-cytochrome c oxidoreductase (cytochrome b-c1 complex, complex III, CIII), resulting in different assemblies (supercomplex SCI(1)III(2)IV(1) and megacomplex MCI(2)III(2)IV(2)).

It localises to the mitochondrion inner membrane. The enzyme catalyses 4 Fe(II)-[cytochrome c] + O2 + 8 H(+)(in) = 4 Fe(III)-[cytochrome c] + 2 H2O + 4 H(+)(out). In terms of biological role, component of the cytochrome c oxidase, the last enzyme in the mitochondrial electron transport chain which drives oxidative phosphorylation. The respiratory chain contains 3 multisubunit complexes succinate dehydrogenase (complex II, CII), ubiquinol-cytochrome c oxidoreductase (cytochrome b-c1 complex, complex III, CIII) and cytochrome c oxidase (complex IV, CIV), that cooperate to transfer electrons derived from NADH and succinate to molecular oxygen, creating an electrochemical gradient over the inner membrane that drives transmembrane transport and the ATP synthase. Cytochrome c oxidase is the component of the respiratory chain that catalyzes the reduction of oxygen to water. Electrons originating from reduced cytochrome c in the intermembrane space (IMS) are transferred via the dinuclear copper A center (CU(A)) of subunit 2 and heme A of subunit 1 to the active site in subunit 1, a binuclear center (BNC) formed by heme A3 and copper B (CU(B)). The BNC reduces molecular oxygen to 2 water molecules using 4 electrons from cytochrome c in the IMS and 4 protons from the mitochondrial matrix. This chain is Cytochrome c oxidase subunit 3 (MT-CO3), found in Lemur catta (Ring-tailed lemur).